We begin with the raw amino-acid sequence, 30 residues long: Cysteine-rich venom protein annuliferin-a (30 aa).

This sequence belongs to the CRISP family. Contains 8 disulfide bonds. Expressed by the venom gland.

It localises to the secreted. In terms of biological role, inhibits calcium-activated potassium channels (KCa), voltage-gated potassium channel (Kv), and the calcium release channel/ryanodine receptor (RyR). The polypeptide is Cysteine-rich venom protein annuliferin-a (Naja annulifera (Banded Egyptian cobra)).